Here is a 276-residue protein sequence, read N- to C-terminus: MESTIGIDAGGTLTKIAYLNEKMQLAFEKFYSNEQNKIIDWLKQNTGKKQICITGGKAKQLQQLLSNSYKIVELNEFEATLIGVRYILKEEKYDINNFILTNIGTGTSIHYVYNDQYIRAGGTGVGGGTIMGLSKLLTNLEHFEDVIPLTKVGSRKELDITVGDIYGGILSPIDNSLTASNFGKAATIESNYNSSDILATVQGLVGEVVTALSLQFAETKNIDHIIYIGSTLCNNIHLQNIISSYTKYQNKIPIFLQDGGNSGAIGALLHVANKKS.

Residue 8 to 15 (DAGGTLTK) participates in ATP binding. E76 functions as the Proton acceptor in the catalytic mechanism. ATP-binding positions include T105, 127–131 (GGTIM), F143, and S230.

Belongs to the type II pantothenate kinase family. As to quaternary structure, homodimer.

The protein localises to the cytoplasm. It catalyses the reaction (R)-pantothenate + ATP = (R)-4'-phosphopantothenate + ADP + H(+). The protein operates within cofactor biosynthesis; coenzyme A biosynthesis; CoA from (R)-pantothenate: step 1/5. Catalyzes the phosphorylation of pantothenate (Pan), the first step in CoA biosynthesis. The polypeptide is Type II pantothenate kinase (Bacillus cereus (strain ATCC 10987 / NRS 248)).